The chain runs to 235 residues: Probable membrane-associated kinase regulator 6 (235 aa).

The interval 108-140 (SAATEEESEPLDTTTSEKIDTRGLNSKPSPTSS) is disordered. The segment covering 130–140 (GLNSKPSPTSS) has biased composition (polar residues).

The protein localises to the cell membrane. Functionally, may be involved in abscisic acid signaling by acting as a kinase regulator. This chain is Probable membrane-associated kinase regulator 6 (MAKR6), found in Arabidopsis thaliana (Mouse-ear cress).